The sequence spans 189 residues: Calcyphosin (189 aa).

EF-hand domains follow at residues 21–56 (LGIQ…LGLV), 57–92 (LDTA…PMSQ), 93–128 (AREA…RTHP), and 136–172 (TEEE…VSAS). 14 residues coordinate Ca(2+): Asp34, Asp36, Ser38, Ser40, Glu45, Asp70, Asp72, Ser74, Thr76, Glu81, Asp106, Ser108, Asp110, and Asp117. The residue at position 40 (Ser40) is a Phosphoserine; by PKA.

As to quaternary structure, monomer. Does not form oligomers in the presence of calcium. Post-translationally, phosphorylated in response to thyrotropin and cAMP. In terms of tissue distribution, detected in thyroid, salivary gland, lung, brain and cerebellum (at protein level).

The protein localises to the cytoplasm. Functionally, calcium-binding protein. May play a role in cellular signaling events (Potential). The polypeptide is Calcyphosin (CAPS) (Canis lupus familiaris (Dog)).